A 792-amino-acid chain; its full sequence is Oxidoreductase cns1 (792 aa).

In terms of assembly, interacts with cns2.

Its subcellular location is the lipid droplet. The protein operates within secondary metabolite biosynthesis. Its function is as follows. Oxidoreductase; part of the gene cluster that mediates the biosynthesis of cordycepin (COR) and pentostatin (PTN), two adenosine analogs with related bioactivity profiles as both mimic adenosine and can inhibit some of the processes that are adenosine dependent. Within the pathway, cns1 catalyzes the last step by converting the cns2 product 2'-carbonyl-3'-deoxyadenosine (2'-C-3'-dA) into cordycepin (3'-deoxyadenosine). The first step of cordycepin biosynthesis involves hydroxyl phosphorylation of the 3'-OH position on adenosine to produce adenosine-3'-monophosphate (3'-AMP), catalyzed by kinase activity of cns3. Next, 3'-AMP is dephosphorylated to 2'-carbonyl-3'-deoxyadenosine by cns2, which is finally converted to cordycepin by the oxidoreductase cns1. Pentostatin production is mediated by the ATP phosphoribosyltransferase activity of cns3 on adenosine to inhibit the activity of adenosine deaminase (ADA) to prevent COR deamination to 3'-deoxyinosine (3'-dI). The sequence is that of Oxidoreductase cns1 from Cordyceps militaris (strain CM01) (Caterpillar fungus).